A 200-amino-acid polypeptide reads, in one-letter code: Recombination protein RecR (200 aa).

Residues 57 to 72 (CRLCRTLTEEELCPQC) form a C4-type zinc finger. The Toprim domain occupies 80–175 (TLLCVVEGPT…VASRIAHGVP (96 aa)).

Belongs to the RecR family.

Its function is as follows. May play a role in DNA repair. It seems to be involved in an RecBC-independent recombinational process of DNA repair. It may act with RecF and RecO. The chain is Recombination protein RecR from Pseudomonas syringae pv. tomato (strain ATCC BAA-871 / DC3000).